Reading from the N-terminus, the 444-residue chain is tRNA-2-methylthio-N(6)-dimethylallyladenosine synthase (444 aa).

The MTTase N-terminal domain maps to 2–119 (KKLYIRTFGC…LPSMLNEVLT (118 aa)). [4Fe-4S] cluster is bound by residues cysteine 11, cysteine 48, cysteine 82, cysteine 161, cysteine 165, and cysteine 168. Residues 147 to 379 (KTSSVTAFVS…QKTIDKNTER (233 aa)) form the Radical SAM core domain. Residues 382 to 444 (KSMVGSVQKI…GNSLVGNLIA (63 aa)) form the TRAM domain.

Belongs to the methylthiotransferase family. MiaB subfamily. As to quaternary structure, monomer. The cofactor is [4Fe-4S] cluster.

The protein resides in the cytoplasm. It carries out the reaction N(6)-dimethylallyladenosine(37) in tRNA + (sulfur carrier)-SH + AH2 + 2 S-adenosyl-L-methionine = 2-methylsulfanyl-N(6)-dimethylallyladenosine(37) in tRNA + (sulfur carrier)-H + 5'-deoxyadenosine + L-methionine + A + S-adenosyl-L-homocysteine + 2 H(+). Catalyzes the methylthiolation of N6-(dimethylallyl)adenosine (i(6)A), leading to the formation of 2-methylthio-N6-(dimethylallyl)adenosine (ms(2)i(6)A) at position 37 in tRNAs that read codons beginning with uridine. In Ruthia magnifica subsp. Calyptogena magnifica, this protein is tRNA-2-methylthio-N(6)-dimethylallyladenosine synthase.